The primary structure comprises 371 residues: Peptide chain release factor 2 (371 aa).

N5-methylglutamine is present on Gln-253.

The protein belongs to the prokaryotic/mitochondrial release factor family. Post-translationally, methylated by PrmC. Methylation increases the termination efficiency of RF2.

It localises to the cytoplasm. In terms of biological role, peptide chain release factor 2 directs the termination of translation in response to the peptide chain termination codons UGA and UAA. The protein is Peptide chain release factor 2 of Mycobacterium marinum (strain ATCC BAA-535 / M).